Reading from the N-terminus, the 140-residue chain is uncharacterized protein (140 aa).

Helical transmembrane passes span A42–S62, A65–G85, and R96–F116.

It localises to the membrane. This is an uncharacterized protein from Saccharomyces cerevisiae (strain ATCC 204508 / S288c) (Baker's yeast).